Reading from the N-terminus, the 429-residue chain is Trigger factor (429 aa).

The PPIase FKBP-type domain occupies 163–248 (GDFVVIDFVG…IKEIKVKETP (86 aa)).

This sequence belongs to the FKBP-type PPIase family. Tig subfamily.

The protein resides in the cytoplasm. The catalysed reaction is [protein]-peptidylproline (omega=180) = [protein]-peptidylproline (omega=0). Its function is as follows. Involved in protein export. Acts as a chaperone by maintaining the newly synthesized protein in an open conformation. Functions as a peptidyl-prolyl cis-trans isomerase. This is Trigger factor from Halothermothrix orenii (strain H 168 / OCM 544 / DSM 9562).